The primary structure comprises 145 residues: UPF0179 protein Maeo_1037 (145 aa).

Belongs to the UPF0179 family.

The polypeptide is UPF0179 protein Maeo_1037 (Methanococcus aeolicus (strain ATCC BAA-1280 / DSM 17508 / OCM 812 / Nankai-3)).